The primary structure comprises 299 residues: Glutamyl-Q tRNA(Asp) synthetase (299 aa).

Residues 9 to 13 (RFAPS) and Glu-45 each bind L-glutamate. A 'HIGH' region motif is present at residues 12–22 (PSPTGPLHFGS). Positions 101, 103, and 118 each coordinate Zn(2+). Tyr-170 and Arg-188 together coordinate L-glutamate. Positions 226 to 230 (KLSKS) match the 'KMSKS' region motif. An ATP-binding site is contributed by Lys-229.

The protein belongs to the class-I aminoacyl-tRNA synthetase family. GluQ subfamily. Requires Zn(2+) as cofactor.

Functionally, catalyzes the tRNA-independent activation of glutamate in presence of ATP and the subsequent transfer of glutamate onto a tRNA(Asp). Glutamate is transferred on the 2-amino-5-(4,5-dihydroxy-2-cyclopenten-1-yl) moiety of the queuosine in the wobble position of the QUC anticodon. The protein is Glutamyl-Q tRNA(Asp) synthetase of Xanthomonas axonopodis pv. citri (strain 306).